A 207-amino-acid polypeptide reads, in one-letter code: MIATEEQARAFVAERCDAAGMERIEALVAALRSENERQNLVSKGSLGEVWQRHIADSAQLLDHVSRETGLWLDLGSGAGFPGLVVAAMQPEKPVLLVESRRKRVEWLTDMVKALKLENCDVAGMRLELLEAREAGVISARAFAPLEKLLRLSARFSTDTTTWVLPKGRSAAQELQGVSRKWQKLFHVEQSVTSEEAAILVGRGRAKT.

S-adenosyl-L-methionine is bound by residues glycine 75, phenylalanine 80, 126-127 (LE), and arginine 140.

This sequence belongs to the methyltransferase superfamily. RNA methyltransferase RsmG family.

Its subcellular location is the cytoplasm. The catalysed reaction is guanosine(527) in 16S rRNA + S-adenosyl-L-methionine = N(7)-methylguanosine(527) in 16S rRNA + S-adenosyl-L-homocysteine. Specifically methylates the N7 position of guanine in position 527 of 16S rRNA. This chain is Ribosomal RNA small subunit methyltransferase G, found in Erythrobacter litoralis (strain HTCC2594).